The chain runs to 303 residues: AP2-like ethylene-responsive transcription factor At1g79700 (303 aa).

Basic residues predominate over residues 1–10; the sequence is MAKVSGRSKK. The tract at residues 1 to 55 is disordered; sequence MAKVSGRSKKTIVDDEISDKTASASESASIALTSKRKRKSPPRNAPLQRSSPYRG. Over residues 20–32 the composition is skewed to polar residues; that stretch reads KTASASESASIAL. 2 consecutive DNA-binding regions (AP2/ERF) follow at residues 52-118 and 154-202; these read PYRG…LNFP and KYRG…TNFD. The segment at 212–259 is disordered; it reads AADKADSDSKPIRSPSREPESSDDNKSPKSEEVIEPSTSPEVIPTRRS. The segment covering 214-243 has biased composition (basic and acidic residues); the sequence is DKADSDSKPIRSPSREPESSDDNKSPKSEE.

This sequence belongs to the AP2/ERF transcription factor family. AP2 subfamily.

The protein localises to the nucleus. Its function is as follows. Probably acts as a transcriptional activator. Binds to the GCC-box pathogenesis-related promoter element. May be involved in the regulation of gene expression by stress factors and by components of stress signal transduction pathways. This Arabidopsis thaliana (Mouse-ear cress) protein is AP2-like ethylene-responsive transcription factor At1g79700.